Consider the following 183-residue polypeptide: MAAPRPCADGPCCSHPSAAPGVQQTLDEMDFERGIWSAALNGDLGRVKYLIQKAVDPSQPDSAGYTALHYASRNGHYAVCQFLLESGAKCDAQTHGGATALHRASYCGHTDIARLLLSHGSNPRLVDADGMTSLHKAAEKGHVDICSLLLQHSPALKAVRDRKSRLACDLLPGNSDLRDLLAS.

ANK repeat units lie at residues 30–59 (DFERGIWSAALNGDLGRVKYLIQKAVDPSQ), 63–92 (AGYTALHYASRNGHYAVCQFLLESGAKCDA), 96–125 (GGATALHRASYCGHTDIARLLLSHGSNPRL), and 129–158 (DGMTSLHKAAEKGHVDICSLLLQHSPALKA). Phosphoserine is present on Ser-153.

This sequence belongs to the ANKRD39 family.

This chain is Ankyrin repeat domain-containing protein 39 (ANKRD39), found in Bos taurus (Bovine).